The following is a 78-amino-acid chain: uncharacterized protein (78 aa).

Its function is as follows. This protein may be involved in virus assembly. Essential for virus function. This is an uncharacterized protein from Sulfolobus spindle-shape virus 1 (SSV1).